We begin with the raw amino-acid sequence, 102 residues long: Small ribosomal subunit protein uS10 (102 aa).

This sequence belongs to the universal ribosomal protein uS10 family. In terms of assembly, part of the 30S ribosomal subunit.

Its function is as follows. Involved in the binding of tRNA to the ribosomes. The protein is Small ribosomal subunit protein uS10 of Thermobifida fusca (strain YX).